Here is a 467-residue protein sequence, read N- to C-terminus: Spermatogenesis- and oogenesis-specific basic helix-loop-helix-containing protein 2 (467 aa).

The region spanning 200-251 (QASFLHSTKEKLRRERIKSCCEQLRTLLPYVKGRKSDVASVIEATVDYVKQV) is the bHLH domain. Residues 443 to 453 (ASASDHQASQP) show a composition bias toward low complexity. The segment at 443–467 (ASASDHQASQPPALPSPQPHDSSYF) is disordered.

Forms both hetero- and homodimers with SOHLH1. Preferentially expressed in the adult ovary and testis. Expressed in the majority of spermatogonia in adult animals, but not in the most undifferentiated spermatogonial population.

The protein resides in the nucleus. Its subcellular location is the cytoplasm. In terms of biological role, transcription regulator of both male and female germline differentiation. Suppresses genes involved in spermatogonial stem cells maintenance, and induces genes important for spermatogonial differentiation. Coordinates oocyte differentiation without affecting meiosis I. This chain is Spermatogenesis- and oogenesis-specific basic helix-loop-helix-containing protein 2 (Sohlh2), found in Mus musculus (Mouse).